Reading from the N-terminus, the 234-residue chain is Glucosamine-6-phosphate deaminase (234 aa).

Asp63 serves as the catalytic Proton acceptor; for enolization step. Asn129 (for ring-opening step) is an active-site residue. Residue His131 is the Proton acceptor; for ring-opening step of the active site. Catalysis depends on Glu136, which acts as the For ring-opening step.

It belongs to the glucosamine/galactosamine-6-phosphate isomerase family. NagB subfamily.

It carries out the reaction alpha-D-glucosamine 6-phosphate + H2O = beta-D-fructose 6-phosphate + NH4(+). It functions in the pathway amino-sugar metabolism; N-acetylneuraminate degradation; D-fructose 6-phosphate from N-acetylneuraminate: step 5/5. Functionally, catalyzes the reversible isomerization-deamination of glucosamine 6-phosphate (GlcN6P) to form fructose 6-phosphate (Fru6P) and ammonium ion. In Listeria monocytogenes serotype 4a (strain HCC23), this protein is Glucosamine-6-phosphate deaminase.